The primary structure comprises 169 residues: Cytochrome c oxidase subunit 4 isoform 1, mitochondrial (169 aa).

The transit peptide at 1–22 directs the protein to the mitochondrion; that stretch reads MLASRALSLIGKRAISTSVCLR. At 23–99 the chain is on the mitochondrial matrix side; that stretch reads AHGSVVKSED…FAEMNRGTNE (77 aa). Position 29 is an N6-acetyllysine; alternate (Lys29). Residue Lys29 is modified to N6-succinyllysine; alternate. Phosphoserine occurs at positions 56 and 58. Lys60 is subject to N6-acetyllysine; alternate. N6-succinyllysine; alternate is present on Lys60. Lys67 carries the N6-acetyllysine modification. The chain crosses the membrane as a helical span at residues 100-125; the sequence is WKTVVGMAMFFIGFTALVLIWEKSYV. Residues 126–169 are Mitochondrial intermembrane-facing; it reads YGPIPHTFDRDWVAMQTKRMLDMKANPIQGFSAKWDYDKNEWKK.

This sequence belongs to the cytochrome c oxidase IV family. As to quaternary structure, component of the cytochrome c oxidase (complex IV, CIV), a multisubunit enzyme composed of 14 subunits. The complex is composed of a catalytic core of 3 subunits MT-CO1, MT-CO2 and MT-CO3, encoded in the mitochondrial DNA, and 11 supernumerary subunits COX4I, COX5A, COX5B, COX6A, COX6B, COX6C, COX7A, COX7B, COX7C, COX8 and NDUFA4, which are encoded in the nuclear genome. The complex exists as a monomer or a dimer and forms supercomplexes (SCs) in the inner mitochondrial membrane with NADH-ubiquinone oxidoreductase (complex I, CI) and ubiquinol-cytochrome c oxidoreductase (cytochrome b-c1 complex, complex III, CIII), resulting in different assemblies (supercomplex SCI(1)III(2)IV(1) and megacomplex MCI(2)III(2)IV(2)). Interacts with PHB2; the interaction decreases in absence of SPHK2. Interacts with AFG1L. Interacts with ABCB7; this interaction allows the regulation of cellular iron homeostasis and cellular reactive oxygen species (ROS) levels in cardiomyocytes. Interacts with FLVCR2; this interaction occurs in the absence of heme and is disrupted upon heme binding. Interacts with IRGC.

The protein resides in the mitochondrion inner membrane. Its pathway is energy metabolism; oxidative phosphorylation. Component of the cytochrome c oxidase, the last enzyme in the mitochondrial electron transport chain which drives oxidative phosphorylation. The respiratory chain contains 3 multisubunit complexes succinate dehydrogenase (complex II, CII), ubiquinol-cytochrome c oxidoreductase (cytochrome b-c1 complex, complex III, CIII) and cytochrome c oxidase (complex IV, CIV), that cooperate to transfer electrons derived from NADH and succinate to molecular oxygen, creating an electrochemical gradient over the inner membrane that drives transmembrane transport and the ATP synthase. Cytochrome c oxidase is the component of the respiratory chain that catalyzes the reduction of oxygen to water. Electrons originating from reduced cytochrome c in the intermembrane space (IMS) are transferred via the dinuclear copper A center (CU(A)) of subunit 2 and heme A of subunit 1 to the active site in subunit 1, a binuclear center (BNC) formed by heme A3 and copper B (CU(B)). The BNC reduces molecular oxygen to 2 water molecules using 4 electrons from cytochrome c in the IMS and 4 protons from the mitochondrial matrix. This Mus musculus (Mouse) protein is Cytochrome c oxidase subunit 4 isoform 1, mitochondrial (Cox4i1).